A 1373-amino-acid polypeptide reads, in one-letter code: DNA-directed RNA polymerase subunit beta (1373 aa).

The protein belongs to the RNA polymerase beta chain family. In terms of assembly, the RNAP catalytic core consists of 2 alpha, 1 beta, 1 beta' and 1 omega subunit. When a sigma factor is associated with the core the holoenzyme is formed, which can initiate transcription.

The enzyme catalyses RNA(n) + a ribonucleoside 5'-triphosphate = RNA(n+1) + diphosphate. DNA-dependent RNA polymerase catalyzes the transcription of DNA into RNA using the four ribonucleoside triphosphates as substrates. The chain is DNA-directed RNA polymerase subunit beta from Rickettsia felis (strain ATCC VR-1525 / URRWXCal2) (Rickettsia azadi).